We begin with the raw amino-acid sequence, 198 residues long: Recombination protein RecR (198 aa).

The C4-type zinc finger occupies 57–72 (CDKCNTFTEAQICEVC). Residues 80-175 (TLLCVVETPA…AVTRLARGVP (96 aa)) form the Toprim domain.

Belongs to the RecR family.

May play a role in DNA repair. It seems to be involved in an RecBC-independent recombinational process of DNA repair. It may act with RecF and RecO. The sequence is that of Recombination protein RecR from Burkholderia multivorans (strain ATCC 17616 / 249).